A 142-amino-acid chain; its full sequence is MMSFVSLLLVGILFHATQAEQLTKCEVFQELKDLKDYGGVSLPEWVCTAFHTSGYDTQAIVQNNDSTEYGLFQINNKIWCKDDQNPHSRNICNISCDKFLDDDLTDDIMCVKKILDKVGINYWLAHKALCSEKLDQWLCEKL.

The N-terminal stretch at 1–19 (MMSFVSLLLVGILFHATQA) is a signal peptide. In terms of domain architecture, C-type lysozyme spans 20–142 (EQLTKCEVFQ…KLDQWLCEKL (123 aa)). Intrachain disulfides connect Cys25–Cys139, Cys47–Cys130, Cys80–Cys96, and Cys92–Cys110. Residues Asn64 and Asn93 are each glycosylated (N-linked (GlcNAc...) asparagine). Residues Lys98, Asp101, Asp103, Asp106, and Asp107 each contribute to the Ca(2+) site.

This sequence belongs to the glycosyl hydrolase 22 family. As to quaternary structure, lactose synthase (LS) is a heterodimer of a catalytic component, beta1,4-galactosyltransferase (beta4Gal-T1) and a regulatory component, alpha-lactalbumin (LA). As to expression, mammary gland specific. Secreted in milk.

It is found in the secreted. Its function is as follows. Regulatory subunit of lactose synthase, changes the substrate specificity of galactosyltransferase in the mammary gland making glucose a good acceptor substrate for this enzyme. This enables LS to synthesize lactose, the major carbohydrate component of milk. In other tissues, galactosyltransferase transfers galactose onto the N-acetylglucosamine of the oligosaccharide chains in glycoproteins. The sequence is that of Alpha-lactalbumin (LALBA) from Ovis aries (Sheep).